We begin with the raw amino-acid sequence, 299 residues long: Bifunctional protein FolD (299 aa).

NADP(+) is bound by residues 168–170 (GRS), S193, and I234.

The protein belongs to the tetrahydrofolate dehydrogenase/cyclohydrolase family. Homodimer.

It carries out the reaction (6R)-5,10-methylene-5,6,7,8-tetrahydrofolate + NADP(+) = (6R)-5,10-methenyltetrahydrofolate + NADPH. The enzyme catalyses (6R)-5,10-methenyltetrahydrofolate + H2O = (6R)-10-formyltetrahydrofolate + H(+). It participates in one-carbon metabolism; tetrahydrofolate interconversion. Its function is as follows. Catalyzes the oxidation of 5,10-methylenetetrahydrofolate to 5,10-methenyltetrahydrofolate and then the hydrolysis of 5,10-methenyltetrahydrofolate to 10-formyltetrahydrofolate. This is Bifunctional protein FolD from Agrobacterium fabrum (strain C58 / ATCC 33970) (Agrobacterium tumefaciens (strain C58)).